The chain runs to 533 residues: Apolipoprotein N-acyltransferase (533 aa).

The next 5 membrane-spanning stretches (helical) occupy residues 17–37, 72–92, 116–136, 165–185, and 190–210; these read FFLP…WPAV, LLFC…GGIL, GFRS…WAYM, GVWG…LLFM, and FQVK…PLLY. Residues 232–499 form the CN hydrolase domain; sequence VQPDIDPHEK…QSVLTADVPL (268 aa). The Proton acceptor role is filled by Glu274. The active site involves Lys352. Cys410 acts as the Nucleophile in catalysis. A helical membrane pass occupies residues 510-530; the sequence is PDLVPHVCLGIAGVLALVAAV.

The protein belongs to the CN hydrolase family. Apolipoprotein N-acyltransferase subfamily.

It is found in the cell inner membrane. The catalysed reaction is N-terminal S-1,2-diacyl-sn-glyceryl-L-cysteinyl-[lipoprotein] + a glycerophospholipid = N-acyl-S-1,2-diacyl-sn-glyceryl-L-cysteinyl-[lipoprotein] + a 2-acyl-sn-glycero-3-phospholipid + H(+). It functions in the pathway protein modification; lipoprotein biosynthesis (N-acyl transfer). Its function is as follows. Catalyzes the phospholipid dependent N-acylation of the N-terminal cysteine of apolipoprotein, the last step in lipoprotein maturation. This Chlorobaculum tepidum (strain ATCC 49652 / DSM 12025 / NBRC 103806 / TLS) (Chlorobium tepidum) protein is Apolipoprotein N-acyltransferase.